A 188-amino-acid chain; its full sequence is F-box only protein 36 (188 aa).

Residues 91–137 form the F-box domain; it reads FDFLERLSDDLLLNIISYLDLEDIARLCQTSHRFAKLCMSDKLWEQI.

In terms of assembly, directly interacts with SKP1 and CUL1.

Its function is as follows. Substrate-recognition component of the SCF (SKP1-CUL1-F-box protein)-type E3 ubiquitin ligase complex. The polypeptide is F-box only protein 36 (FBXO36) (Pongo abelii (Sumatran orangutan)).